Reading from the N-terminus, the 508-residue chain is Photosystem II CP47 reaction center protein (508 aa).

Helical transmembrane passes span 21-36, 101-115, 140-156, 203-218, 237-252, and 457-472; these read AVHL…WAGS, IVLS…IWHW, GIHL…FGAF, IAAG…FHLS, VLSS…AFVV, and TFAL…HGAR.

It belongs to the PsbB/PsbC family. PsbB subfamily. As to quaternary structure, PSII is composed of 1 copy each of membrane proteins PsbA, PsbB, PsbC, PsbD, PsbE, PsbF, PsbH, PsbI, PsbJ, PsbK, PsbL, PsbM, PsbT, PsbX, PsbY, PsbZ, Psb30/Ycf12, at least 3 peripheral proteins of the oxygen-evolving complex and a large number of cofactors. It forms dimeric complexes. It depends on Binds multiple chlorophylls. PSII binds additional chlorophylls, carotenoids and specific lipids. as a cofactor.

Its subcellular location is the plastid. The protein resides in the chloroplast thylakoid membrane. Its function is as follows. One of the components of the core complex of photosystem II (PSII). It binds chlorophyll and helps catalyze the primary light-induced photochemical processes of PSII. PSII is a light-driven water:plastoquinone oxidoreductase, using light energy to abstract electrons from H(2)O, generating O(2) and a proton gradient subsequently used for ATP formation. In Marchantia polymorpha (Common liverwort), this protein is Photosystem II CP47 reaction center protein.